Here is a 109-residue protein sequence, read N- to C-terminus: Protein reprimo (109 aa).

N-linked (GlcNAc...) asparagine glycans are attached at residues asparagine 7 and asparagine 18. Residues 56–76 (VVQIAVMCVLSLTVVFGIFFL) form a helical membrane-spanning segment. Residue serine 98 is modified to Phosphoserine.

The protein belongs to the reprimo family.

It is found in the cytoplasm. The protein localises to the membrane. In terms of biological role, may be involved in the regulation of p53-dependent G2 arrest of the cell cycle. Seems to induce cell cycle arrest by inhibiting CDK1 activity and nuclear translocation of the CDC2 cyclin B1 complex. The polypeptide is Protein reprimo (Rprm) (Rattus norvegicus (Rat)).